Consider the following 135-residue polypeptide: ATP synthase epsilon chain (135 aa).

It belongs to the ATPase epsilon chain family. F-type ATPases have 2 components, CF(1) - the catalytic core - and CF(0) - the membrane proton channel. CF(1) has five subunits: alpha(3), beta(3), gamma(1), delta(1), epsilon(1). CF(0) has three main subunits: a, b and c.

It localises to the cell inner membrane. Functionally, produces ATP from ADP in the presence of a proton gradient across the membrane. This is ATP synthase epsilon chain from Bradyrhizobium sp. (strain BTAi1 / ATCC BAA-1182).